A 141-amino-acid chain; its full sequence is Cystatin (141 aa).

Residues 1 to 26 form the signal peptide; the sequence is MVHSQLPVAAPLRLLCALLLLPSATM. In terms of domain architecture, Cystatin spans 29–129; it reads GGLSPRSVTD…CHFQVWSRPW (101 aa). The Secondary area of contact motif lies at 73–77; that stretch reads QVVAG. Disulfide bonds link Cys-91/Cys-107 and Cys-120/Cys-140.

Belongs to the cystatin family. Expressed at a low level by the venom gland (at protein level).

The protein localises to the secreted. Its function is as follows. Inhibits various C1 cysteine proteases including cathepsin L, papain and cathepsin B. This protein has no toxic activity and its function in the venom is unknown. It may play a role as a housekeeping or regulatory protein. The chain is Cystatin from Oxyuranus scutellatus scutellatus (Australian taipan).